Here is a 131-residue protein sequence, read N- to C-terminus: Protein ApaG (131 aa).

The 125-residue stretch at 7–131 folds into the ApaG domain; sequence PVKPYDLTVS…FLLAMPRTLH (125 aa).

The sequence is that of Protein ApaG from Bordetella bronchiseptica (strain ATCC BAA-588 / NCTC 13252 / RB50) (Alcaligenes bronchisepticus).